The primary structure comprises 287 residues: MINALIINYPWFMYLVVGLFSLAVGSLLNVIIYRLPIILQEEWKEQCCELFHFEQRKEKIKLNLFLPRSFCPHCKAMVKAWQNIPLLAILVLRGRCYQCDSPFSIRYPFVETLTTVLSLYASWHFGFTIQLLFALLAIWILISLVFIDLDHQLLPDSLTLGLLWIGLIANTQNVFVSLDVAVLSCAGAYLALWLFINLFYLMTCKVCMGHGDFKLFAAFGAWLGWMYLPIILLISSITGAIIGLIYLKINGKSRDTAIPFGPFLCISGLIAMFWGDSIINWYIGYWM.

The chain crosses the membrane as a helical span at residues 12–32 (FMYLVVGLFSLAVGSLLNVII). Zn(2+) is bound by residues Cys-71, Cys-74, Cys-96, and Cys-99. The next 5 helical transmembrane spans lie at 127–147 (FTIQLLFALLAIWILISLVFI), 158–178 (LTLGLLWIGLIANTQNVFVSL), 182–202 (VLSCAGAYLALWLFINLFYLM), 215–235 (LFAAFGAWLGWMYLPIILLIS), and 259–279 (PFGPFLCISGLIAMFWGDSII).

This sequence belongs to the peptidase A24 family. Zn(2+) serves as cofactor.

The protein resides in the cell inner membrane. It catalyses the reaction Typically cleaves a -Gly-|-Phe- bond to release an N-terminal, basic peptide of 5-8 residues from type IV prepilin, and then N-methylates the new N-terminal amino group, the methyl donor being S-adenosyl-L-methionine.. In terms of biological role, plays an essential role in type IV pili and type II pseudopili formation by proteolytically removing the leader sequence from substrate proteins and subsequently monomethylating the alpha-amino group of the newly exposed N-terminal phenylalanine. The polypeptide is Prepilin leader peptidase/N-methyltransferase (pilD) (Legionella pneumophila).